The following is a 569-amino-acid chain: Protein AF-9 (569 aa).

Residues 1–138 enclose the YEATS domain; sequence MASSCAVQVK…EDFRRKLLKA (138 aa). The tract at residues 138-476 is disordered; it reads AGGDPNRSIH…PPPPLLKTNN (339 aa). Low complexity predominate over residues 149 to 190; the sequence is SSSSSSSSSSSSSSSSSSSSSSSSSSSSSSSSSSSSSSSSSS. Residues 202 to 265 are compositionally biased toward basic and acidic residues; that stretch reads EHKEKPSKDS…PKPMSKEPKA (64 aa). 2 positions are modified to phosphoserine: Ser-289 and Ser-295. The short motif at 296–301 is the Nuclear localization signal element; it reads AKKRKK. Positions 304 to 314 are enriched in low complexity; it reads SEALFKSFSSA. Positions 323–350 are enriched in basic and acidic residues; it reads ADKKQIKDKSHVKMGKVKIESETSEKKK. Lys-340 participates in a covalent cross-link: Glycyl lysine isopeptide (Lys-Gly) (interchain with G-Cter in SUMO2). Acidic residues predominate over residues 358-369; that stretch reads DIVDPNDSDVEE. Positions 372 to 396 are enriched in low complexity; sequence SSKSDSEQPSPASSSSSSSSSFTPS. Phosphoserine is present on residues Ser-413 and Ser-420. Over residues 415 to 430 the composition is skewed to acidic residues; the sequence is DNEEESDEAEDNDNDS. Residues 446–462 show a composition bias toward low complexity; the sequence is VSLSDGSDSESSSASSP. A Phosphoserine modification is found at Ser-484.

Component of the super elongation complex (SEC), at least composed of EAF1, EAF2, CDK9, MLLT3/AF9, AFF (AFF1 or AFF4), the P-TEFb complex and ELL (ELL, ELL2 or ELL3). Interacts with BCOR. Interacts with CBX8. Interacts with ALKBH4. Ubiquitously expressed. Strong expression in the spleen.

Its subcellular location is the nucleus. It localises to the chromosome. Functionally, chromatin reader component of the super elongation complex (SEC), a complex required to increase the catalytic rate of RNA polymerase II transcription by suppressing transient pausing by the polymerase at multiple sites along the DNA. Specifically recognizes and binds acylated histone H3, with a preference for histone H3 that is crotonylated. Crotonylation marks active promoters and enhancers and confers resistance to transcriptional repressors. Recognizes and binds histone H3 crotonylated at 'Lys-9' (H3K9cr), and with slightly lower affinity histone H3 crotonylated at 'Lys-18' (H3K18cr). Also recognizes and binds histone H3 acetylated and butyrylated at 'Lys-9' (H3K9ac and H3K9bu, respectively), but with lower affinity than crotonylated histone H3. In the SEC complex, MLLT3 is required to recruit the complex to crotonylated histones. Recruitment of the SEC complex to crotonylated histones promotes recruitment of DOT1L on active chromatin to deposit histone H3 'Lys-79' methylation (H3K79me). Plays a key role in hematopoietic stem cell (HSC) maintenance by preserving, rather than conferring, HSC stemness. Acts by binding to the transcription start site of active genes in HSCs and sustaining level of H3K79me2, probably by recruiting DOT1L. This chain is Protein AF-9 (Mllt3), found in Mus musculus (Mouse).